We begin with the raw amino-acid sequence, 2832 residues long: Cyclic beta-(1,2)-glucan synthase NdvB (2832 aa).

A run of 7 helical transmembrane segments spans residues 411–431 (FAIAGPNILLTILAMIVVYAF), 444–464 (IMLLLFALPASEGAMGLFNTV), 810–830 (LIPVAWLAASVMGWYYMEPTP), 831–851 (ALIWQLVLIFSLFVAPTLSLI), 880–900 (QVALRIVFIAHNAAMMADAIV), 938–958 (WTAPALALVSLALAAISDTGL), and 959–979 (PFIGLPFALIWAASPAVAWFV). A Glycoamylase-like domain is found at 1299 to 1506 (LASEARLTSL…NGQLREWFHA (208 aa)).

This sequence belongs to the NdvB family.

The protein resides in the cell inner membrane. It carries out the reaction [(1-&gt;2)-beta-D-glucosyl](n) + UDP-alpha-D-glucose = [(1-&gt;2)-beta-D-glucosyl](n+1) + UDP + H(+). Functionally, involved in the biosynthesis of cyclic beta-(1,2)-glucan. It seems that NdvB is involved in three enzymatic activities. First, it may catalyze the transfer of the first glucose from UDP-Glc to an unknown amino acid. In the second enzymatic activity (UDP-Glc:beta-(1,2) oligosaccharide glucosyltransferase), it may be responsible for chain elongation. Finally, in the third activity, it may catalyze glucan cyclization and release from the protein. NdvB is also involved in nodule invasion and in bacteroid development. This Rhizobium meliloti (strain 1021) (Ensifer meliloti) protein is Cyclic beta-(1,2)-glucan synthase NdvB.